The chain runs to 127 residues: LIM domain-containing protein 2 (127 aa).

The residue at position 1 (Met-1) is an N-acetylmethionine. The interval 1-24 is disordered; the sequence is MFQAAGAAQATPSHDAKGGGSSTV. The 61-residue stretch at 38–98 folds into the LIM zinc-binding domain; it reads ETCAACQKTV…KPHFQQLFKS (61 aa). Zn(2+) is bound by residues Cys-40, Cys-43, His-61, Cys-64, Cys-67, Cys-70, Cys-88, and His-91.

As to quaternary structure, interacts with ILK.

The protein resides in the cytoplasm. It localises to the nucleus. In terms of biological role, acts as an activator of the protein-kinase ILK, thereby regulating cell motility. This Homo sapiens (Human) protein is LIM domain-containing protein 2.